A 419-amino-acid chain; its full sequence is L-rhamnose isomerase (419 aa).

Histidine 262, aspartate 294, and aspartate 296 together coordinate Mn(2+).

It belongs to the rhamnose isomerase family. Homotetramer. It depends on Mn(2+) as a cofactor.

The protein localises to the cytoplasm. It catalyses the reaction L-rhamnopyranose = L-rhamnulose. Its pathway is carbohydrate degradation; L-rhamnose degradation; glycerone phosphate from L-rhamnose: step 1/3. Its function is as follows. Catalyzes the interconversion of L-rhamnose and L-rhamnulose. This chain is L-rhamnose isomerase, found in Escherichia coli O17:K52:H18 (strain UMN026 / ExPEC).